A 173-amino-acid polypeptide reads, in one-letter code: Large ribosomal subunit protein uL22c (173 aa).

This sequence belongs to the universal ribosomal protein uL22 family. Part of the 50S ribosomal subunit.

It localises to the plastid. The protein localises to the chloroplast. Functionally, this protein binds specifically to 23S rRNA. In terms of biological role, the globular domain of the protein is located near the polypeptide exit tunnel on the outside of the subunit, while an extended beta-hairpin is found that lines the wall of the exit tunnel in the center of the 70S ribosome. This chain is Large ribosomal subunit protein uL22c (rpl22), found in Drimys granadensis.